The primary structure comprises 92 residues: Small ribosomal subunit protein bS20 (92 aa).

Positions 1–23 (MANTTSAKKATRKIARRTDVNKA) are disordered.

It belongs to the bacterial ribosomal protein bS20 family.

Its function is as follows. Binds directly to 16S ribosomal RNA. This Rhizobium leguminosarum bv. trifolii (strain WSM2304) protein is Small ribosomal subunit protein bS20.